The following is a 470-amino-acid chain: UDP-N-acetylmuramoylalanine--D-glutamate ligase (470 aa).

ATP is bound at residue G121–T127.

Belongs to the MurCDEF family.

The protein resides in the cytoplasm. The catalysed reaction is UDP-N-acetyl-alpha-D-muramoyl-L-alanine + D-glutamate + ATP = UDP-N-acetyl-alpha-D-muramoyl-L-alanyl-D-glutamate + ADP + phosphate + H(+). Its pathway is cell wall biogenesis; peptidoglycan biosynthesis. In terms of biological role, cell wall formation. Catalyzes the addition of glutamate to the nucleotide precursor UDP-N-acetylmuramoyl-L-alanine (UMA). The sequence is that of UDP-N-acetylmuramoylalanine--D-glutamate ligase from Rhizobium johnstonii (strain DSM 114642 / LMG 32736 / 3841) (Rhizobium leguminosarum bv. viciae).